The following is a 398-amino-acid chain: CCA-adding enzyme (398 aa).

The ATP site is built by Gly-32 and Arg-35. Residues Gly-32 and Arg-35 each coordinate CTP. Asp-45 and Asp-47 together coordinate Mg(2+). Positions 116, 159, 162, 165, and 168 each coordinate ATP. CTP-binding residues include Arg-116, Asp-159, Arg-162, Arg-165, and Arg-168.

The protein belongs to the tRNA nucleotidyltransferase/poly(A) polymerase family. Bacterial CCA-adding enzyme type 3 subfamily. As to quaternary structure, homodimer. It depends on Mg(2+) as a cofactor.

The enzyme catalyses a tRNA precursor + 2 CTP + ATP = a tRNA with a 3' CCA end + 3 diphosphate. It carries out the reaction a tRNA with a 3' CCA end + 2 CTP + ATP = a tRNA with a 3' CCACCA end + 3 diphosphate. Its function is as follows. Catalyzes the addition and repair of the essential 3'-terminal CCA sequence in tRNAs without using a nucleic acid template. Adds these three nucleotides in the order of C, C, and A to the tRNA nucleotide-73, using CTP and ATP as substrates and producing inorganic pyrophosphate. tRNA 3'-terminal CCA addition is required both for tRNA processing and repair. Also involved in tRNA surveillance by mediating tandem CCA addition to generate a CCACCA at the 3' terminus of unstable tRNAs. While stable tRNAs receive only 3'-terminal CCA, unstable tRNAs are marked with CCACCA and rapidly degraded. This is CCA-adding enzyme from Lacticaseibacillus paracasei (strain ATCC 334 / BCRC 17002 / CCUG 31169 / CIP 107868 / KCTC 3260 / NRRL B-441) (Lactobacillus paracasei).